Here is a 373-residue protein sequence, read N- to C-terminus: tRNA (guanine(26)-N(2))-dimethyltransferase (373 aa).

Residues 2–365 (KIISEGETKL…AELSDLVVLI (364 aa)) form the Trm1 methyltransferase domain. Residues Arg-35, Arg-66, Asp-86, Asp-113, and Ala-114 each coordinate S-adenosyl-L-methionine.

It belongs to the class I-like SAM-binding methyltransferase superfamily. Trm1 family.

The enzyme catalyses guanosine(26) in tRNA + 2 S-adenosyl-L-methionine = N(2)-dimethylguanosine(26) in tRNA + 2 S-adenosyl-L-homocysteine + 2 H(+). Functionally, dimethylates a single guanine residue at position 26 of a number of tRNAs using S-adenosyl-L-methionine as donor of the methyl groups. This is tRNA (guanine(26)-N(2))-dimethyltransferase from Methanococcus maripaludis (strain C7 / ATCC BAA-1331).